Reading from the N-terminus, the 1106-residue chain is Inversin (1106 aa).

16 ANK repeats span residues 13–42 (SLAS…ELKD), 47–76 (FGRT…DVNR), 80–110 (SRRT…WMQK), 113–144 (EGMT…EVDT), 148–177 (NKQT…NIGI), 181–213 (EGKI…TESL), 220–250 (EGRT…NVTS), 254–285 (LFRT…TIPS), 288–317 (QGAT…VKDD), 321–350 (EGRT…DIDI), 356–385 (YAGT…QVDA), 389–418 (MKHT…RVDL), 422–451 (DGHS…NPNV), 455–484 (AGRT…DPNI), 488–517 (EGRT…FPNH), and 523–553 (ERYT…SIAA). The D-box 1 signature appears at 490 to 498 (RTALHWLCN). The IQ 1 domain occupies 555–584 (QDIAAFKIQAVYKGYKVRKAFQERKNLLMK). Positions 589–607 (RKDAAAKKREEESKRKEAS) are enriched in basic and acidic residues. Disordered regions lie at residues 589-615 (RKDA…MQNM), 636-688 (LQLS…ELQS), 746-782 (ANGT…GNRG), and 809-833 (AVPK…CSPA). 2 stretches are compositionally biased toward polar residues: residues 636–645 (LQLSNKQTDL) and 653–666 (VSAS…NSRG). A compositionally biased stretch (basic residues) spans 812 to 822 (KSKRHQQKSRH). The D-box 2 motif lies at 944-952 (RKELFRKKN). The IQ 2 domain occupies 951 to 980 (KNYAATVIQRTWRSYRLRQELSQLLSAKRQ).

In terms of assembly, binds calmodulin via its IQ domains. Interacts with APC2.

It localises to the cytoplasm. It is found in the cytoskeleton. Required for normal renal development and establishment of left-right axis. Probably acts as a molecular switch between different Wnt signaling pathways. Inhibits the canonical Wnt pathway by targeting cytoplasmic disheveled for degradation by the ubiquitin-proteasome. This suggests that it is required in renal development to oppose the repression of terminal differentiation of tubular epithelial cells by Wnt signaling. The protein is Inversin (INVS) of Gallus gallus (Chicken).